Here is a 69-residue protein sequence, read N- to C-terminus: DNA gyrase inhibitor YacG (69 aa).

Positions 14, 17, 33, and 37 each coordinate Zn(2+). Residues 46 to 69 (ADEEKSIPGAPDMSDSDGWSEDQY) form a disordered region. Residues 59 to 69 (SDSDGWSEDQY) show a composition bias toward acidic residues.

The protein belongs to the DNA gyrase inhibitor YacG family. In terms of assembly, interacts with GyrB. Requires Zn(2+) as cofactor.

In terms of biological role, inhibits all the catalytic activities of DNA gyrase by preventing its interaction with DNA. Acts by binding directly to the C-terminal domain of GyrB, which probably disrupts DNA binding by the gyrase. This chain is DNA gyrase inhibitor YacG, found in Aliivibrio fischeri (strain MJ11) (Vibrio fischeri).